A 190-amino-acid chain; its full sequence is dTTP/UTP pyrophosphatase (190 aa).

The active-site Proton acceptor is the Asp70.

Belongs to the Maf family. YhdE subfamily. A divalent metal cation is required as a cofactor.

Its subcellular location is the cytoplasm. It catalyses the reaction dTTP + H2O = dTMP + diphosphate + H(+). It carries out the reaction UTP + H2O = UMP + diphosphate + H(+). Functionally, nucleoside triphosphate pyrophosphatase that hydrolyzes dTTP and UTP. May have a dual role in cell division arrest and in preventing the incorporation of modified nucleotides into cellular nucleic acids. This chain is dTTP/UTP pyrophosphatase, found in Gloeobacter violaceus (strain ATCC 29082 / PCC 7421).